The primary structure comprises 152 residues: Xanthine-guanine phosphoribosyltransferase (152 aa).

5-phospho-alpha-D-ribose 1-diphosphate is bound by residues 37 to 38 (RG), R69, and 88 to 96 (DDLVDTGGT). Residue R69 coordinates GMP. Mg(2+) is bound at residue D89. Guanine is bound by residues D92 and I135. Residues D92 and I135 each coordinate xanthine. Residues 92 to 96 (DTGGT) and 134 to 135 (WI) contribute to the GMP site.

The protein belongs to the purine/pyrimidine phosphoribosyltransferase family. XGPT subfamily. In terms of assembly, homotetramer. Requires Mg(2+) as cofactor.

Its subcellular location is the cell inner membrane. It carries out the reaction GMP + diphosphate = guanine + 5-phospho-alpha-D-ribose 1-diphosphate. The enzyme catalyses XMP + diphosphate = xanthine + 5-phospho-alpha-D-ribose 1-diphosphate. The catalysed reaction is IMP + diphosphate = hypoxanthine + 5-phospho-alpha-D-ribose 1-diphosphate. It functions in the pathway purine metabolism; GMP biosynthesis via salvage pathway; GMP from guanine: step 1/1. The protein operates within purine metabolism; XMP biosynthesis via salvage pathway; XMP from xanthine: step 1/1. Purine salvage pathway enzyme that catalyzes the transfer of the ribosyl-5-phosphate group from 5-phospho-alpha-D-ribose 1-diphosphate (PRPP) to the N9 position of the 6-oxopurines guanine and xanthine to form the corresponding ribonucleotides GMP (guanosine 5'-monophosphate) and XMP (xanthosine 5'-monophosphate), with the release of PPi. To a lesser extent, also acts on hypoxanthine. In Klebsiella pneumoniae (strain 342), this protein is Xanthine-guanine phosphoribosyltransferase.